Here is a 309-residue protein sequence, read N- to C-terminus: NAD kinase (309 aa).

The active-site Proton acceptor is Asp-89. NAD(+)-binding positions include Asp-89 to Gly-90, Asn-163 to Glu-164, His-174, Arg-191, Asp-193, and Thr-204 to Ser-209.

The protein belongs to the NAD kinase family. The cofactor is a divalent metal cation.

It is found in the cytoplasm. The enzyme catalyses NAD(+) + ATP = ADP + NADP(+) + H(+). Its function is as follows. Involved in the regulation of the intracellular balance of NAD and NADP, and is a key enzyme in the biosynthesis of NADP. Catalyzes specifically the phosphorylation on 2'-hydroxyl of the adenosine moiety of NAD to yield NADP. The chain is NAD kinase from Shewanella sp. (strain ANA-3).